The sequence spans 152 residues: Ninjurin-1 (152 aa).

An N-acetylmethionine modification is found at M1. The interval 1–26 is disordered; that stretch reads MDSGTEEYELNGGLPPGTPGSPDASP. At 1–78 the chain is on the extracellular side; the sequence is MDSGTEEYEL…EQGPSFAFYV (78 aa). S21 and S25 each carry phosphoserine. Residues 26 to 37 are N-terminal adhesion motif; the sequence is PARWGWRHGPIN. Positions 40–69 are required to induce plasma membrane rupture; the sequence is HYASKKSAAESMLDIALLMANASQLKAVVE. The helix alpha1 stretch occupies residues 44 to 55; sequence KKSAAESMLDIA. Residues 58–74 form a helix alpha2 region; that stretch reads MANASQLKAVVEQGPSF. An N-linked (GlcNAc...) asparagine glycan is attached at N60. The chain crosses the membrane as a helical span at residues 79-103; it reads PLVVLISISLVLQIGVGVLLIFLVK. Residues 104–113 lie on the Cytoplasmic side of the membrane; sequence YDLNNPAKHA. A helical membrane pass occupies residues 114–138; that stretch reads KLDFLNNLATGLVFIIVVVNIFITA. Residues 139–152 are Extracellular-facing; sequence FGVQKPLMDMAPQQ.

The protein belongs to the ninjurin family. As to quaternary structure, homodimer; in absence of death stimuli, forms an inactive homodimer. Homooligomer; in response to death stimuli, homooligomerizes into long, highly branched filaments and large, ring-shaped structures in the membrane. Cleaved by MMP9 protease to generate the Secreted ninjurin-1 form. In terms of processing, N-linked glycosylation is required for homooligomerization. As to expression, widely expressed in both adult and embryonic tissues, primarily those of epithelial origin.

It is found in the cell membrane. The protein localises to the synaptic cell membrane. The protein resides in the secreted. With respect to regulation, in response to death stimuli, homooligomerizes and disrupts membrane integrity by introducing the hydrophilic faces of alpha1 and alpha2 helices into the hydrophobic membrane. Homooligomerization and ability to mediate plasma membrane rupture is inhibited by glycine; it is unclear whether glycine directly or indirectly inhibits homooligomerization. In normal conditions, NINJ1 is autoinhibited via formation of a homodimer: in the inactive homodimer, the alpha1 and alpha2 helices (residues 44-74) form a single transmembrane region without a kink, in which hydrophilic faces of alpha1 and alpha2 helices are sequestered. Functionally, effector of various programmed cell death, such as pyroptosis and necroptosis, which mediates plasma membrane rupture (cytolysis). Oligomerizes in response to death stimuli and forms ring-like structures on the plasma membrane: acts by cutting and shedding membrane disks, like a cookie cutter, leading to membrane damage and loss that cannot be repaired by the cell. Plasma membrane rupture leads to release intracellular molecules named damage-associated molecular patterns (DAMPs) that propagate the inflammatory response. Mechanistically, mediates plasma membrane rupture by introducing hydrophilic faces of 2 alpha helices into the hydrophobic membrane. Induces plasma membrane rupture downstream of Gasdermin (GSDMA, GSDMB, GSDMC, GSDMD, or GSDME) or MLKL during pyroptosis or necroptosis, respectively. Acts as an effector of PANoptosis downstream of CASP1, CASP4, CASP8 and RIPK3. Also induces plasma membrane rupture in response to cell swelling caused by osmotic stress and ferroptosis downstream of lipid peroxidation. Acts as a regulator of Toll-like receptor 4 (TLR4) signaling triggered by lipopolysaccharide (LPS) during systemic inflammation; directly binds LPS. Involved in leukocyte migration during inflammation by promoting transendothelial migration of macrophages via homotypic binding. Promotes the migration of monocytes across the brain endothelium to central nervous system inflammatory lesions. Also acts as a homophilic transmembrane adhesion molecule involved in various processes such as axonal growth, cell chemotaxis and angiogenesis. Promotes cell adhesion by mediating homophilic interactions via its extracellular N-terminal adhesion motif (N-NAM). Involved in the progression of the inflammatory stress by promoting cell-to-cell interactions between immune cells and endothelial cells. Plays a role in nerve regeneration by promoting maturation of Schwann cells. Acts as a regulator of angiogenesis. Promotes the formation of new vessels by mediating the interaction between capillary pericyte cells and endothelial cells. Promotes osteoclasts development by enhancing the survival of prefusion osteoclasts. Also involved in striated muscle growth and differentiation. Its function is as follows. Secreted form generated by cleavage, which has chemotactic activity. Acts as an anti-inflammatory mediator by promoting monocyte recruitment, thereby ameliorating atherosclerosis. The chain is Ninjurin-1 from Homo sapiens (Human).